The following is a 544-amino-acid chain: Chaperonin GroEL 2 (544 aa).

ATP is bound by residues 30-33 (TLGP), lysine 51, 87-91 (DGTTT), glycine 415, and aspartate 496.

This sequence belongs to the chaperonin (HSP60) family. In terms of assembly, forms a cylinder of 14 subunits composed of two heptameric rings stacked back-to-back. Interacts with the co-chaperonin GroES.

The protein resides in the cytoplasm. The catalysed reaction is ATP + H2O + a folded polypeptide = ADP + phosphate + an unfolded polypeptide.. In terms of biological role, together with its co-chaperonin GroES, plays an essential role in assisting protein folding. The GroEL-GroES system forms a nano-cage that allows encapsulation of the non-native substrate proteins and provides a physical environment optimized to promote and accelerate protein folding. This chain is Chaperonin GroEL 2, found in Rhizobium johnstonii (strain DSM 114642 / LMG 32736 / 3841) (Rhizobium leguminosarum bv. viciae).